The chain runs to 229 residues: Endonuclease NucS (229 aa).

Belongs to the NucS endonuclease family.

It is found in the cytoplasm. Functionally, cleaves both 3' and 5' ssDNA extremities of branched DNA structures. This is Endonuclease NucS from Corynebacterium diphtheriae (strain ATCC 700971 / NCTC 13129 / Biotype gravis).